The following is a 457-amino-acid chain: MSIHFSSRSTAYPGRGAQVRLSSGRASFGSRSLYGLGSSRPRVAVRSAYGGPVGAGIREITINQSLLAPLSVDIDPTIQQVRQEEREQIKTLNNKFASFIDKVRFLEQQNKMLETKWALLQEQKSAKSSQLPRIFEAQIAGLRQQLETLQLDGGRLEVELRNMQDVVEDFKNKYEEEINRRTAAENEFVLLKKDVDAAYTNKVELEAKADSLQDEINFLKTLHETELAELQSQISDTSVVLSMDNSRSLDLDGIIADVKAQYEEMANHSRAEAEAWYQTKFETLQAQAGKHGDDLRNTRNEIAEMNRSIQRLQAEIDTLKNQRAKLESSIAEAEEQGELAIKDAHAKQGELEAALQKAKQDVARQLREYQELLNTKLALDIEIATYRKLLEGEESRLSGDGMGPVNISVVNSTGGNGGKLIFGGTMGSNALSFSGGPGALRAYSIKTTSTTRRGTHN.

Ser-2 is subject to N-acetylserine. Ser-2 is modified (phosphoserine). Positions 2 to 84 (SIHFSSRSTA…DPTIQQVRQE (83 aa)) are head. Residue Ser-7 is glycosylated (O-linked (GlcNAc) serine). Arg-15 is modified (dimethylated arginine; alternate). Residue Arg-15 is modified to Omega-N-methylarginine; alternate. Phosphoserine is present on residues Ser-47 and Ser-65. Residues 84–120 (EEREQIKTLNNKFASFIDKVRFLEQQNKMLETKWALL) form a coil 1A region. Positions 85–397 (EREQIKTLNN…KLLEGEESRL (313 aa)) constitute an IF rod domain. Thr-91 is subject to Phosphothreonine. The segment at 121 to 138 (QEQKSAKSSQLPRIFEAQ) is linker 1. Lys-124 is covalently cross-linked (Glycyl lysine isopeptide (Lys-Gly) (interchain with G-Cter in SUMO2)). The interval 139 to 230 (IAGLRQQLET…TLHETELAEL (92 aa)) is coil 1B. At Lys-173 the chain carries N6-acetyllysine. Ser-211, Ser-246, and Ser-248 each carry phosphoserine. A linker 12 region spans residues 231–254 (QSQISDTSVVLSMDNSRSLDLDGI). The segment at 255-393 (IADVKAQYEE…ATYRKLLEGE (139 aa)) is coil 2. Glycyl lysine isopeptide (Lys-Gly) (interchain with G-Cter in SUMO2) cross-links involve residues Lys-259 and Lys-280. At Thr-283 the chain carries Phosphothreonine. Glycyl lysine isopeptide (Lys-Gly) (interchain with G-Cter in SUMO2) cross-links involve residues Lys-290 and Lys-325. The tail stretch occupies residues 394–457 (ESRLSGDGMG…TSTTRRGTHN (64 aa)).

It belongs to the intermediate filament family. As to quaternary structure, heterotetramer of two type I and two type II keratins. Interacts with eukaryotic translation initiator factor 3 (eIF3) subunit EIF3S10. Interacts with GPER1. Arg-15 is dimethylated, probably to asymmetric dimethylarginine. In terms of tissue distribution, expressed in most simple epithelia tested including liver, lactating mammary gland, lung, kidney, stomach, duodenum, colon, oviduct, uterus, pancreas, epididymis, prostate, preputial gland and mesothelium, and in most stratified epithelia tested including dorsal skin, paw/toe, tail, tongue, cervix, forestomach, and bladder. Also expressed in Henle layer of the inner root sheath of whisker follicle.

Its function is as follows. Blocks interferon-dependent interphase and stimulates DNA synthesis in cells. This chain is Keratin, type II cytoskeletal 7, found in Mus musculus (Mouse).